A 511-amino-acid chain; its full sequence is Arabinose import ATP-binding protein AraG (511 aa).

2 ABC transporter domains span residues 5-240 (LEFR…MVGR) and 240-501 (RQID…LRPR). ATP is bound at residue 37-44 (GENGAGKS).

Belongs to the ABC transporter superfamily. Arabinose importer (TC 3.A.1.2.2) family. In terms of assembly, the complex is composed of two ATP-binding proteins (AraG), two transmembrane proteins (AraH) and a solute-binding protein (AraF).

It is found in the cell inner membrane. It carries out the reaction L-arabinose(out) + ATP + H2O = L-arabinose(in) + ADP + phosphate + H(+). In terms of biological role, part of the ABC transporter complex AraFGH involved in arabinose import. Responsible for energy coupling to the transport system. This is Arabinose import ATP-binding protein AraG from Ralstonia nicotianae (strain ATCC BAA-1114 / GMI1000) (Ralstonia solanacearum).